Reading from the N-terminus, the 280-residue chain is MSHNDTIPLYQSSQSDIDEIENMMNDSFQSGPGTVLPARPPSPIRPSIPVSSSPFVQSNLPPLPPSSSSSTQKVMPVPAPPPLPSAGNEGNKSIGGSGFGSPPNTLTEPVWDTVKRDLSRIVSNLKLVVFPNPYREDPGKALRDWDLWGPFFFIVFLGLTLSWSASVKKSEVFAVAFALLAAGAVILTLNVLLLGGHIIFFQSLSLLGYCLFPLDVGAVICMLKDNVILKMVVVSVTLAWSSWAAYPFMSAAVNPRRKALALYPVFLMYVSVGFLIIAIN.

Polar residues predominate over residues 1–15 (MSHNDTIPLYQSSQS). Residues 1 to 106 (MSHNDTIPLY…SGFGSPPNTL (106 aa)) are disordered. Residues 1–146 (MSHNDTIPLY…DPGKALRDWD (146 aa)) lie on the Cytoplasmic side of the membrane. The helical transmembrane segment at 147 to 167 (LWGPFFFIVFLGLTLSWSASV) threads the bilayer. Over 168–171 (KKSE) the chain is Lumenal. Transmembrane regions (helical) follow at residues 172–192 (VFAV…LNVL) and 193–213 (LLGG…CLFP). The Lumenal segment spans residues 214 to 230 (LDVGAVICMLKDNVILK). Residues 231-251 (MVVVSVTLAWSSWAAYPFMSA) traverse the membrane as a helical segment. Residues 252 to 258 (AVNPRRK) lie on the Cytoplasmic side of the membrane. The helical transmembrane segment at 259-279 (ALALYPVFLMYVSVGFLIIAI) threads the bilayer. A topological domain (lumenal) is located at residue Asn-280.

The protein belongs to the YIP1 family. In terms of assembly, homodimer and heterodimer with YIP4A. Component of a trans-Golgi network (TGN)-localized ECH/YIP4 complex made of ECH, YIP4A and YIP4B. Interacts directly with ECH. In terms of tissue distribution, expressed in developing root hair cells.

The protein localises to the golgi apparatus. Its subcellular location is the trans-Golgi network membrane. Together with YIP4A, involved in the regulation of cell elongation during root and hypocotyl growth. YIP4A and YIP4B are central trafficking components in Rho-of-plant (ROPs, e.g. ARAC4/ROP2, ARAC5/ROP4 and ARAC3/ROP6) small GTPases-dependent root hair formation, thus contributing to activation and plasma membrane accumulation of ROPs during hair initiation. The ECH/YIP4 complex is involved in the modulation of the trans-Golgi network (TGN)-mediated trafficking of some proteins and cell wall components (e.g. pectin and hemicellulose) to the cell wall in dark-grown hypocotyls and in secretory cells of the seed coat. The protein is Protein YIP4b of Arabidopsis thaliana (Mouse-ear cress).